Here is a 253-residue protein sequence, read N- to C-terminus: Non-homologous end joining protein Ku (253 aa).

The Ku domain maps to 9–192 (ISFGLVNIPV…EITEEELELA (184 aa)).

It belongs to the prokaryotic Ku family. In terms of assembly, homodimer. Interacts with LigD.

With LigD forms a non-homologous end joining (NHEJ) DNA repair enzyme, which repairs dsDNA breaks with reduced fidelity. Binds linear dsDNA with 5'- and 3'- overhangs but not closed circular dsDNA nor ssDNA. Recruits and stimulates the ligase activity of LigD. The polypeptide is Non-homologous end joining protein Ku (Archaeoglobus fulgidus (strain ATCC 49558 / DSM 4304 / JCM 9628 / NBRC 100126 / VC-16)).